A 172-amino-acid polypeptide reads, in one-letter code: Shikimate kinase (172 aa).

ATP is bound at residue 11–16; it reads GAGKST. Residue Ser-15 participates in Mg(2+) binding. Substrate-binding residues include Asp-33, Arg-57, and Gly-79. Arg-117 provides a ligand contact to ATP. Arg-136 contacts substrate. Residue Arg-153 coordinates ATP.

It belongs to the shikimate kinase family. In terms of assembly, monomer. The cofactor is Mg(2+).

The protein localises to the cytoplasm. The enzyme catalyses shikimate + ATP = 3-phosphoshikimate + ADP + H(+). It functions in the pathway metabolic intermediate biosynthesis; chorismate biosynthesis; chorismate from D-erythrose 4-phosphate and phosphoenolpyruvate: step 5/7. Catalyzes the specific phosphorylation of the 3-hydroxyl group of shikimic acid using ATP as a cosubstrate. This chain is Shikimate kinase, found in Pseudomonas paraeruginosa (strain DSM 24068 / PA7) (Pseudomonas aeruginosa (strain PA7)).